The primary structure comprises 144 residues: Large ribosomal subunit protein uL15 (144 aa).

Positions 1 to 13 (MVRERTKKLRGGH) are enriched in basic residues. Residues 1 to 32 (MVRERTKKLRGGHYGRGFKAGRGKGKKGGSGN) are disordered.

This sequence belongs to the universal ribosomal protein uL15 family. As to quaternary structure, part of the 50S ribosomal subunit.

In terms of biological role, binds to the 23S rRNA. The protein is Large ribosomal subunit protein uL15 of Thermoplasma acidophilum (strain ATCC 25905 / DSM 1728 / JCM 9062 / NBRC 15155 / AMRC-C165).